We begin with the raw amino-acid sequence, 256 residues long: UPF0259 membrane protein YPO2199/y2042/YP_1997 (256 aa).

6 helical membrane-spanning segments follow: residues 20-40, 90-110, 118-138, 141-161, 192-212, and 221-241; these read IAAI…LNQT, FSAL…IAMV, ALQA…LMFI, LVIQ…AIAL, LIVP…FLIS, and IATI…LVYL.

The protein belongs to the UPF0259 family.

It localises to the cell inner membrane. The protein is UPF0259 membrane protein YPO2199/y2042/YP_1997 of Yersinia pestis.